The chain runs to 441 residues: Glutamate--tRNA ligase 1 (441 aa).

The 'HIGH' region signature appears at 8-18 (PSPTGHIHVGN). The short motif at 239 to 243 (ELSKR) is the 'KMSKS' region element. Residue lysine 242 participates in ATP binding.

Belongs to the class-I aminoacyl-tRNA synthetase family. Glutamate--tRNA ligase type 1 subfamily. As to quaternary structure, monomer.

The protein localises to the cytoplasm. It catalyses the reaction tRNA(Glu) + L-glutamate + ATP = L-glutamyl-tRNA(Glu) + AMP + diphosphate. Its function is as follows. Catalyzes the attachment of glutamate to tRNA(Glu) in a two-step reaction: glutamate is first activated by ATP to form Glu-AMP and then transferred to the acceptor end of tRNA(Glu). The chain is Glutamate--tRNA ligase 1 from Paracoccus denitrificans (strain Pd 1222).